The sequence spans 253 residues: 5'-nucleotidase SurE (253 aa).

A divalent metal cation contacts are provided by Asp-8, Asp-9, Ser-40, and Asn-97.

Belongs to the SurE nucleotidase family. Requires a divalent metal cation as cofactor.

It is found in the cytoplasm. The enzyme catalyses a ribonucleoside 5'-phosphate + H2O = a ribonucleoside + phosphate. Its function is as follows. Nucleotidase that shows phosphatase activity on nucleoside 5'-monophosphates. This is 5'-nucleotidase SurE from Desulforamulus reducens (strain ATCC BAA-1160 / DSM 100696 / MI-1) (Desulfotomaculum reducens).